Here is a 515-residue protein sequence, read N- to C-terminus: MGEEQSTVSGSGGARASGGGSAGQPESPRPRGDRVRTAGPRAAASSSRPNGGGGGRDPGCVDASVQEPASNRAPAGQPARLPLSGPLDPQSLELQLEREAEGAGPREAPPGQQPPDGLLLDVLAQRHPPPAKPQVLCSVYCVESDLPEAPSAESPSPSESPPQAPLGPIPASPPPSFPSSPLSLPADPLSPDGGSIELEFYLAPEPFSVPGLLGAPPYSGLGGVGDPYAPLMVLMCRVCLEDKPIKPLPCCKKAVCEECLKIYLSSQVQLGQVEIKCPVTECFEFLEETTVVYNLTHEDSIKYKYFLELGRIDSSTKPCPQCKHFTTFKKKGHIPTPSRSESRYKIQCPTCQLIWCFKCHSPWHEGVNCKEYKKGDKLLRHWASEIEHGQRNAQKCPKCKIHIQRTEGCDHMTCSQCNTNFCYRCGERYRQLRFFGDHTSNLSIFGCKYRYLPERPHLRRLVRGSVCAGKLFIAPLILVLGLALGAIAVVIGLFVFPIYCLCKKQRKRSRTGMHW.

Disordered stretches follow at residues 1-125 and 147-189; these read MGEE…VLAQ and PEAP…ADPL. Positions 10-22 are enriched in gly residues; sequence GSGGARASGGGSA. 2 stretches are compositionally biased toward low complexity: residues 39-49 and 147-157; these read GPRAAASSSRP and PEAPSAESPSP. Positions 158–178 are enriched in pro residues; sequence SESPPQAPLGPIPASPPPSFP. The span at 179–189 shows a compositional bias: low complexity; it reads SSPLSLPADPL. The segment at 232–451 is TRIAD supradomain; that stretch reads MVLMCRVCLE…LSIFGCKYRY (220 aa). Positions 236, 239, 256, 259, 356, 359, 364, 369, 396, and 399 each coordinate Zn(2+). The segment at 236-282 adopts an RING-type 1 zinc-finger fold; it reads CRVCLEDKPIKPLPCCKKAVCEECLKIYLSSQVQLGQVEIKCPVTEC. An IBR-type zinc finger spans residues 301 to 369; sequence IKYKYFLELG…HSPWHEGVNC (69 aa). Residues 396–425 form an RING-type 2; atypical zinc finger; the sequence is CPKCKIHIQRTEGCDHMTCSQCNTNFCYRC. C409 is an active-site residue. Residues C414, C417, C422, C425, H438, and C447 each contribute to the Zn(2+) site. A helical membrane pass occupies residues 476-496; it reads LILVLGLALGAIAVVIGLFVF.

It belongs to the RBR family. RNF217 subfamily. Interacts with HAX1.

It is found in the membrane. Its subcellular location is the cytoplasm. The catalysed reaction is [E2 ubiquitin-conjugating enzyme]-S-ubiquitinyl-L-cysteine + [acceptor protein]-L-lysine = [E2 ubiquitin-conjugating enzyme]-L-cysteine + [acceptor protein]-N(6)-ubiquitinyl-L-lysine.. It functions in the pathway protein modification; protein ubiquitination. Its function is as follows. E3 ubiquitin-protein ligase which accepts ubiquitin from E2 ubiquitin-conjugating enzymes in the form of a thioester and then directly transfers the ubiquitin to targeted substrates. Mediates the degradation of the iron exporter ferroportin/SLC40A1 and thus regulates iron homeostasis. This is E3 ubiquitin-protein ligase RNF217 (Rnf217) from Mus musculus (Mouse).